The chain runs to 575 residues: MLSRLLPFLVTISSLSLEFIAYGTELPSPSYVWFEARFFQHILHWKPIPNQSESTYYEVALKQYGNSTWNDIHICRKAQALSCDLTTFTLDLYHRSYGYRARVRAVDNSQYSNWTTTETRFTVDEVILTVDSVTLKAMDGIIYGTIHPPRPTITPAGDEYEQVFKDLRVYKISIRKFSELKNATKRVKQETFTLTVPIGVRKFCVKVLPRLESRINKAEWSEEQCLLITTEQYFTVTNLSILVISMLLFCGILVCLVLQWYIRHPGKLPTVLVFKKPHDFFPANPLCPETPDAIHIVDLEVFPKVSLELRDSVLHGSTDSGFGSGKPSLQTEESQFLLPGSHPQIQGTLGKEESPGLQATCGDNTDSGICLQEPGLHSSMGPAWKQQLGYTHQDQDDSDVNLVQNSPGQPKYTQDASALGHVCLLEPKAPEEKDQVMVTFQGYQKQTRWKAEAAGPAECLDEEIPLTDAFDPELGVHLQDDLAWPPPALAAGYLKQESQGMASAPPGTPSRQWNQLTEEWSLLGVVSCEDLSIESWRFAHKLDPLDCGAAPGGLLDSLGSNLVTLPLISSLQVEE.

A signal peptide spans 1–16 (MLSRLLPFLVTISSLS). The Extracellular portion of the chain corresponds to 17–241 (LEFIAYGTEL…QYFTVTNLSI (225 aa)). Asn50, Asn66, Asn113, and Asn182 each carry an N-linked (GlcNAc...) asparagine glycan. The cysteines at positions 204 and 225 are disulfide-linked. Asn238 carries N-linked (GlcNAc...) asparagine glycosylation. Residues 242 to 262 (LVISMLLFCGILVCLVLQWYI) traverse the membrane as a helical segment. At 263 to 575 (RHPGKLPTVL…PLISSLQVEE (313 aa)) the chain is on the cytoplasmic side. Residues Tyr443 and Tyr493 each carry the phosphotyrosine modification.

Belongs to the type II cytokine receptor family. Interacts with IL10. Interacts with IL10RB. Interacts (via its cytoplasmic domain) with JAK1 (via N-terminus). Interacts with BTRC; this interaction leads to IL10RA ubiquitination and subsequent degradation. Interacts with STAT3. In terms of processing, phosphorylated. Phosphorylation of the cytoplasmic tail induced STAT3 activation. Ubiquitinated by BTRC; ubiquitination leads to endocytosis and subsequent degradation of IL10RA.

It is found in the cell membrane. Its subcellular location is the cytoplasm. In terms of biological role, cell surface receptor for the cytokine IL10 that participates in IL10-mediated anti-inflammatory functions, limiting excessive tissue disruption caused by inflammation. Upon binding to IL10, induces a conformational change in IL10RB, allowing IL10RB to bind IL10 as well. In turn, the heterotetrameric assembly complex, composed of two subunits of IL10RA and IL10RB, activates the kinases JAK1 and TYK2 that are constitutively associated with IL10RA and IL10RB respectively. These kinases then phosphorylate specific tyrosine residues in the intracellular domain in IL10RA leading to the recruitment and subsequent phosphorylation of STAT3. Once phosphorylated, STAT3 homodimerizes, translocates to the nucleus and activates the expression of anti-inflammatory genes. In addition, IL10RA-mediated activation of STAT3 inhibits starvation-induced autophagy. The sequence is that of Interleukin-10 receptor subunit alpha (Il10ra) from Mus musculus (Mouse).